We begin with the raw amino-acid sequence, 855 residues long: RE1-silencing transcription factor (855 aa).

The segment at 141-163 (FFCKPCQYQGENEQEFIVHIRTH) adopts a C2H2-type 1 zinc-finger fold. The tract at residues 172–199 (NGGDSDEDLSADAGPQTSVPNAESAESN) is disordered. The segment covering 186–199 (PQTSVPNAESAESN) has biased composition (polar residues). C2H2-type zinc fingers lie at residues 204–226 (IRCE…LKHH), 236–258 (FKCT…LRNH), 264–286 (FTCS…IRTH), 292–314 (FQCI…MRTH), 320–343 (FKCD…RQVH), 349–371 (LSCP…VELH), and 377–400 (FLCP…KSRH). A disordered region spans residues 458–811 (NAVVETEKSS…ETPTEERDAS (354 aa)). 3 stretches are compositionally biased toward basic and acidic residues: residues 462–472 (ETEKSSKKNMD), 481–496 (NEKK…EKTA), and 504–535 (AVKD…EKAL). Polar residues predominate over residues 548 to 569 (SSVQQQSDDCEQTQHTPQQNET). A compositionally biased stretch (basic and acidic residues) spans 570-580 (QENRPEKENRS). Over residues 594-604 (QTKKPCKKQTK) the composition is skewed to basic residues. The segment covering 628–638 (RKAENPAEPKQ) has biased composition (basic and acidic residues). The span at 639–648 (RIKRTKKKKD) shows a compositional bias: basic residues. The segment covering 652-662 (PTTSEANQTNP) has biased composition (polar residues). 2 stretches are compositionally biased toward basic and acidic residues: residues 711-721 (PAVEDVQRPLE) and 799-811 (KLPE…RDAS). Residues 818–840 (HTCIFCDRSFALEMDYRKHLNRH) form a C2H2-type 9 zinc finger.

Its subcellular location is the nucleus. The protein resides in the cytoplasm. Functionally, transcriptional repressor which binds neuron-restrictive silencer element (NRSE) and represses neuronal gene transcription in non-neuronal cells. This chain is RE1-silencing transcription factor (rest), found in Danio rerio (Zebrafish).